Consider the following 360-residue polypeptide: S-adenosylmethionine:tRNA ribosyltransferase-isomerase (360 aa).

Belongs to the QueA family. Monomer.

It is found in the cytoplasm. It carries out the reaction 7-aminomethyl-7-carbaguanosine(34) in tRNA + S-adenosyl-L-methionine = epoxyqueuosine(34) in tRNA + adenine + L-methionine + 2 H(+). The protein operates within tRNA modification; tRNA-queuosine biosynthesis. Functionally, transfers and isomerizes the ribose moiety from AdoMet to the 7-aminomethyl group of 7-deazaguanine (preQ1-tRNA) to give epoxyqueuosine (oQ-tRNA). This is S-adenosylmethionine:tRNA ribosyltransferase-isomerase from Rhizobium rhizogenes (strain K84 / ATCC BAA-868) (Agrobacterium radiobacter).